The sequence spans 163 residues: MADSSFDVVSKVDRQEVDNALNQAAKELSTRFDFRGTDTTIAWKGEEAIEIVSSTEERVKAAVDVFKEKLVRRDISMKAFDAGDPQASGKTYKVSGTLKQGISSEDAKKITKLIRDEGPKGVKAQIQGDEIRVSSKKRDDLQAVIALLKGADLDVALQFVNYR.

This sequence belongs to the YajQ family.

Functionally, nucleotide-binding protein. In Mycolicibacterium vanbaalenii (strain DSM 7251 / JCM 13017 / BCRC 16820 / KCTC 9966 / NRRL B-24157 / PYR-1) (Mycobacterium vanbaalenii), this protein is Nucleotide-binding protein Mvan_0997.